The chain runs to 393 residues: MSLPLTRKDLMIVNMGPQHPSMHGVLRLIVTLDGEDVIDCEPILGYLHRGMEKIAENRTIIQYLPYVTRWDYLATMFTEAITVNAPEFLENIQIPQRASYIRVIMLELSRIASHLLWLGPFMADLGAQTPFFYIFRERELIYDLFEAATGMRMMHNYFRIGGVAADLPYGWIEKCLDFCDYFLRGVVEYQQLITQNPIFLERVERVGFISGEEAVNWGLSGPMLRASGIRWDLRKVDLYESYNQFGWKVQWQKEGDSLARYLVRIGEMRESIKIIQQAVEKIPGGPYENLEVRRFKKEKNSEWNDFEYRFLGKKPSPNFELSKQELYVRIEAPKGELGIYLVGDDGLFPWRWKIRPPGFINLQILPQLVKKMKLADIMTILGSIDIIMGEVDR.

It belongs to the complex I 49 kDa subunit family. As to quaternary structure, NDH is composed of at least 16 different subunits, 5 of which are encoded in the nucleus.

It is found in the plastid. It localises to the chloroplast thylakoid membrane. It carries out the reaction a plastoquinone + NADH + (n+1) H(+)(in) = a plastoquinol + NAD(+) + n H(+)(out). The enzyme catalyses a plastoquinone + NADPH + (n+1) H(+)(in) = a plastoquinol + NADP(+) + n H(+)(out). In terms of biological role, NDH shuttles electrons from NAD(P)H:plastoquinone, via FMN and iron-sulfur (Fe-S) centers, to quinones in the photosynthetic chain and possibly in a chloroplast respiratory chain. The immediate electron acceptor for the enzyme in this species is believed to be plastoquinone. Couples the redox reaction to proton translocation, and thus conserves the redox energy in a proton gradient. The polypeptide is NAD(P)H-quinone oxidoreductase subunit H, chloroplastic (Brachypodium distachyon (Purple false brome)).